A 105-amino-acid polypeptide reads, in one-letter code: Iron-sulfur cluster assembly protein CyaY (105 aa).

It belongs to the frataxin family.

In terms of biological role, involved in iron-sulfur (Fe-S) cluster assembly. May act as a regulator of Fe-S biogenesis. This Dechloromonas aromatica (strain RCB) protein is Iron-sulfur cluster assembly protein CyaY.